The chain runs to 511 residues: Glutamyl-tRNA(Gln) amidotransferase subunit A, mitochondrial (511 aa).

Residues Lys72 and Ser149 each act as charge relay system in the active site. Ser173 serves as the catalytic Acyl-ester intermediate.

The protein belongs to the amidase family. GatA subfamily. Subunit of the heterotrimeric GatCAB amidotransferase (AdT) complex, composed of A, B and C subunits.

It is found in the mitochondrion. It catalyses the reaction L-glutamyl-tRNA(Gln) + L-glutamine + ATP + H2O = L-glutaminyl-tRNA(Gln) + L-glutamate + ADP + phosphate + H(+). Functionally, allows the formation of correctly charged Gln-tRNA(Gln) through the transamidation of misacylated Glu-tRNA(Gln) in the mitochondria. The reaction takes place in the presence of glutamine and ATP through an activated gamma-phospho-Glu-tRNA(Gln). The sequence is that of Glutamyl-tRNA(Gln) amidotransferase subunit A, mitochondrial from Fusarium vanettenii (strain ATCC MYA-4622 / CBS 123669 / FGSC 9596 / NRRL 45880 / 77-13-4) (Fusarium solani subsp. pisi).